We begin with the raw amino-acid sequence, 383 residues long: TOM1-like protein 2 (383 aa).

Positions 45 to 178 (ATLETLEEPN…GLHARGEENS (134 aa)) constitute a VHS domain. The region spanning 223–310 (LSIKDKKEQI…VLSSYKKPDE (88 aa)) is the GAT domain. The disordered stretch occupies residues 305–383 (YKKPDETEKK…LGLSSDEDEK (79 aa)). Basic and acidic residues-rich tracts occupy residues 306–316 (KKPDETEKKAS) and 339–354 (EPVKKTGADDDKKHSE). Phosphoserine is present on residues serine 377 and serine 378.

This sequence belongs to the TOM1 family. In terms of tissue distribution, ubiquitously expressed.

It is found in the cytoplasm. The protein resides in the membrane. Binds ubiquitin in vitro. Might contribute to the loading of the ESCRT machinery. In Arabidopsis thaliana (Mouse-ear cress), this protein is TOM1-like protein 2.